A 70-amino-acid chain; its full sequence is Conotoxin Im23.3 (70 aa).

A signal peptide spans 1-22; sequence MIMRMTLTLFVLVVMTAASASG. A propeptide spanning residues 23 to 28 is cleaved from the precursor; that stretch reads DALTEA. 3 disulfide bridges follow: Cys34-Cys41, Cys45-Cys53, and Cys54-Cys69.

Belongs to the conotoxin K superfamily. As to expression, expressed by the venom duct.

It is found in the secreted. In terms of biological role, neurotoxin that induces excitatory symptoms in mice following intracranial administration. No symptoms are observed after intraperitoneal and intravenous (tail vein) injections. This Conus imperialis (Imperial cone) protein is Conotoxin Im23.3.